The chain runs to 161 residues: ATP synthase subunit b 1 (161 aa).

A helical membrane pass occupies residues 3–23; that stretch reads LDATFYALVGLILFFVLIAYL.

The protein belongs to the ATPase B chain family. As to quaternary structure, F-type ATPases have 2 components, F(1) - the catalytic core - and F(0) - the membrane proton channel. F(1) has five subunits: alpha(3), beta(3), gamma(1), delta(1), epsilon(1). F(0) has three main subunits: a(1), b(2) and c(10-14). The alpha and beta chains form an alternating ring which encloses part of the gamma chain. F(1) is attached to F(0) by a central stalk formed by the gamma and epsilon chains, while a peripheral stalk is formed by the delta and b chains.

The protein resides in the cell inner membrane. Functionally, f(1)F(0) ATP synthase produces ATP from ADP in the presence of a proton or sodium gradient. F-type ATPases consist of two structural domains, F(1) containing the extramembraneous catalytic core and F(0) containing the membrane proton channel, linked together by a central stalk and a peripheral stalk. During catalysis, ATP synthesis in the catalytic domain of F(1) is coupled via a rotary mechanism of the central stalk subunits to proton translocation. In terms of biological role, component of the F(0) channel, it forms part of the peripheral stalk, linking F(1) to F(0). This chain is ATP synthase subunit b 1, found in Sinorhizobium medicae (strain WSM419) (Ensifer medicae).